A 333-amino-acid polypeptide reads, in one-letter code: MIAVLFLAILCLEVDSTAPTPDPSLDVEWNEWRTKHGKTYNMNEERLKRAVWEKNFKMIELHNWEYLEGRHDFTMAMNAFGDLTNIEFVKMMTGFQRQKIKKTHIFQDHQFLYVPKRVDWRQLGYVTPVKNQGHCASSWAFSATGSLEGQMFRKTERLIPLSEQNLLDCMGSNVTHGCSGGFMQYAFQYVKDNGGLATEESYPYRGQGRECRYHAENSAANVRDFVQIPGSEEALMKAVAKVGPISVAVDASHGSFQFYGSGIYYEPQCKRVHLNHAVLVVGYGFEGEESDGNSFWLVKNSWGEEWGMKGYMKLAKDWSNHCGIATYSTYPIV.

Residues 1 to 17 (MIAVLFLAILCLEVDST) form the signal peptide. Intrachain disulfides connect Cys-135-Cys-178, Cys-169-Cys-211, and Cys-269-Cys-322. An N-linked (GlcNAc...) asparagine glycan is attached at Asn-173. Residues His-276 and Asn-300 contribute to the active site.

This sequence belongs to the peptidase C1 family. Sertoli cells.

It localises to the secreted. This chain is Testin-2 (Testin), found in Rattus norvegicus (Rat).